Reading from the N-terminus, the 2448-residue chain is Non-reducing polyketide synthase mapC (2448 aa).

An N-terminal acylcarrier protein transacylase domain (SAT) region spans residues 14 to 226; the sequence is VLFGPQCPDI…HHEAHREGIQ (213 aa). The tract at residues 330–350 is disordered; that stretch reads GFSNESPQPSTASLSNSVQTF. Positions 359 to 775 constitute a Ketosynthase family 3 (KS3) domain; sequence ASPIAITGMA…GSNAALIVKE (417 aa). Catalysis depends on for beta-ketoacyl synthase activity residues cysteine 524, histidine 659, and histidine 698. The malonyl-CoA:ACP transacylase (MAT) domain stretch occupies residues 885-1188; it reads LCFGGQNGLT…HKIDLGGSSG (304 aa). The active-site For acyl/malonyl transferase activity is serine 972. The tract at residues 1256–1388 is N-terminal hotdog fold; the sequence is GQEAGLLCQL…GTVCLHQERS (133 aa). One can recognise a PKS/mFAS DH domain in the interval 1256–1565; sequence GQEAGLLCQL…FTSVSIRSLT (310 aa). A product template (PT) domain region spans residues 1261–1564; that stretch reads LLCQLSESPD…RFTSVSIRSL (304 aa). The Proton acceptor; for dehydratase activity role is filled by histidine 1290. Residues 1414–1565 are C-terminal hotdog fold; the sequence is ASNGLKGSTV…FTSVSIRSLT (152 aa). The Proton donor; for dehydratase activity role is filled by aspartate 1471. Residues 1610–1684 form the Carrier domain; it reads AKDLATVQEM…GLVEHIFPGH (75 aa). Position 1644 is an O-(pantetheine 4'-phosphoryl)serine (serine 1644). Residues 1841–2076 form a methyltransferase (CMeT) domain region; the sequence is PYALEHDLLQ…GFEWVDWTNN (236 aa). Catalysis depends on for thioesterase activity residues serine 2227, aspartate 2385, and histidine 2417.

It is found in the cytoplasm. The protein resides in the cytosol. The enzyme catalyses 3 malonyl-CoA + acetyl-CoA + S-adenosyl-L-methionine + H(+) = 5-methylorsellinate + S-adenosyl-L-homocysteine + 3 CO2 + 4 CoA. It functions in the pathway secondary metabolite biosynthesis; terpenoid biosynthesis. Its function is as follows. Non-reducing polyketide synthase; part of the gene cluster that mediates the biosynthesis of mycophenolic acid (MPA), the first isolated antibiotic natural product in the world obtained from a culture of Penicillium brevicompactum in 1893. MpaC catalyzes the synthesis of 5-methylorsellinic acid (5MOA) via the condensation of 1 acetyl-CoA starter unit with 3 malonyl-CoA units and one methylation step. The first step of the pathway is the synthesis of 5-methylorsellinic acid (5MOA) by the cytosolic polyketide synthase mpaC. 5MOA is then converted to the phthalide compound 5,7-dihydroxy-4,6-dimethylphthalide (DHMP) by the endoplasmic reticulum-bound cytochrome P450 monooxygenase mpaDE. MpaDE first catalyzes hydroxylation of 5-MOA to 4,6-dihydroxy-2-(hydroxymethyl)-3-methylbenzoic acid (DHMB). MpaDE then acts as a lactone synthase that catalyzes the ring closure to convert DHMB into DHMP. The next step is the prenylation of DHMP by the Golgi apparatus-associated prenyltransferase mpaA to yield farnesyl-DHMP (FDHMP). The ER-bound oxygenase mpaB then mediates the oxidative cleavage the C19-C20 double bond in FDHMP to yield FDHMP-3C via a mycophenolic aldehyde intermediate. The O-methyltransferase mpaG catalyzes the methylation of FDHMP-3C to yield MFDHMP-3C. After the cytosolic methylation of FDHMP-3C, MFDHMP-3C enters into peroxisomes probably via free diffusion due to its low molecular weight. Upon a peroxisomal CoA ligation reaction, catalyzed by a beta-oxidation component enzyme acyl-CoA ligase ACL891, MFDHMP-3C-CoA would then be restricted to peroxisomes for the following beta-oxidation pathway steps. The peroxisomal beta-oxidation machinery than converts MFDHMP-3C-CoA into MPA_CoA, via a beta-oxidation chain-shortening process. Finally mpaH acts as a peroxisomal acyl-CoA hydrolase with high substrate specificity toward MPA-CoA to release the final product MPA. The sequence is that of Non-reducing polyketide synthase mapC from Penicillium brevicompactum.